The chain runs to 141 residues: HTH-type transcriptional repressor NsrR (141 aa).

The region spanning 2–129 (QLTSFTDYGL…DNYTLADLVE (128 aa)) is the HTH rrf2-type domain. Residues 28–51 (ISQVTEVYGVSRNHMVKIINQLSR) constitute a DNA-binding region (H-T-H motif). Residues Cys-91, Cys-96, and Cys-102 each contribute to the [2Fe-2S] cluster site.

It depends on [2Fe-2S] cluster as a cofactor.

Functionally, nitric oxide-sensitive repressor of genes involved in protecting the cell against nitrosative stress. May require iron for activity. This is HTH-type transcriptional repressor NsrR from Enterobacter sp. (strain 638).